A 600-amino-acid polypeptide reads, in one-letter code: Integrator complex subunit 11 (600 aa).

6 residues coordinate Zn(2+): His68, His70, Asp72, His73, His157, and Asp178. The HXHXDH motif signature appears at His68 to His73. Residue Glu203 is part of the active site. Residue Lys381 forms a Glycyl lysine isopeptide (Lys-Gly) (interchain with G-Cter in SUMO) linkage. His414 provides a ligand contact to Zn(2+). Glycyl lysine isopeptide (Lys-Gly) (interchain with G-Cter in SUMO) cross-links involve residues Lys462 and Lys475. A Nuclear localization signal motif is present at residues Leu469–Leu479.

It belongs to the metallo-beta-lactamase superfamily. RNA-metabolizing metallo-beta-lactamase-like family. INTS11 subfamily. As to quaternary structure, component of the Integrator complex, composed of core subunits INTS1, INTS2, INTS3, INTS4, INTS5, INTS6, INTS7, INTS8, INTS9/RC74, INTS10, INTS11/CPSF3L, INTS12, INTS13, INTS14 and INTS15. The core complex associates with protein phosphatase 2A subunits PPP2CA and PPP2R1A, to form the Integrator-PP2A (INTAC) complex. INTS11 is part of the RNA endonuclease subcomplex, composed of INTS4, INTS9, INTS11 and inositol hexakisphosphate (InsP6). Interacts with WDR73; interaction is required for the assembly of the RNA endonuclease subcomplex in the cytoplasm. Interacts with BRAT1; interaction is required for the assembly of the RNA endonuclease subcomplex and inhibits the endonuclease activity of INTS11 before formation of mature integrator complex. Zn(2+) is required as a cofactor. Sumoylated; sumoylation regulates its subcellular location and is required for integrator complex integrity.

The protein resides in the nucleus. The protein localises to the cytoplasm. Its activity is regulated as follows. The RNA endonuclease activity is inhibited by BRAT1 that forms hyrogen bond and hydrophobic interactions with the active site. Its function is as follows. RNA endonuclease component of the integrator complex, a multiprotein complex that terminates RNA polymerase II (Pol II) transcription in the promoter-proximal region of genes. The integrator complex provides a quality checkpoint during transcription elongation by driving premature transcription termination of transcripts that are unfavorably configured for transcriptional elongation: the complex terminates transcription by (1) catalyzing dephosphorylation of the C-terminal domain (CTD) of Pol II subunit POLR2A/RPB1 and SUPT5H/SPT5, (2) degrading the exiting nascent RNA transcript via endonuclease activity and (3) promoting the release of Pol II from bound DNA. The integrator complex is also involved in terminating the synthesis of non-coding Pol II transcripts, such as enhancer RNAs (eRNAs), small nuclear RNAs (snRNAs), telomerase RNAs and long non-coding RNAs (lncRNAs). Within the integrator complex, INTS11 constitutes the RNA endonuclease subunit that degrades exiting nascent RNA transcripts. Mediates recruitment of cytoplasmic dynein to the nuclear envelope, probably as component of the integrator complex. In Pongo abelii (Sumatran orangutan), this protein is Integrator complex subunit 11 (INTS11).